The primary structure comprises 559 residues: Potassium-transporting ATPase potassium-binding subunit (559 aa).

The next 12 membrane-spanning stretches (helical) occupy residues 5–25, 63–83, 131–151, 173–193, 254–274, 282–302, 327–347, 356–376, 379–399, 416–436, 483–503, and 525–545; these read GFLL…PLGM, LLAI…LLML, VGLT…VFAL, ITLW…IQQG, VQML…GEVV, AILW…MWAE, FGIL…CGAV, ALGG…FGGV, GLYG…LMVG, MIAL…ALAM, LLLA…VMAI, and ALFI…TFIP.

It belongs to the KdpA family. The system is composed of three essential subunits: KdpA, KdpB and KdpC.

Its subcellular location is the cell inner membrane. Part of the high-affinity ATP-driven potassium transport (or Kdp) system, which catalyzes the hydrolysis of ATP coupled with the electrogenic transport of potassium into the cytoplasm. This subunit binds the periplasmic potassium ions and delivers the ions to the membrane domain of KdpB through an intramembrane tunnel. The protein is Potassium-transporting ATPase potassium-binding subunit of Klebsiella pneumoniae subsp. pneumoniae (strain ATCC 700721 / MGH 78578).